Here is a 340-residue protein sequence, read N- to C-terminus: Guanine nucleotide-binding protein G(I)/G(S)/G(T) subunit beta-1 (340 aa).

WD repeat units lie at residues 53 to 83 (GHLA…IIWD), 95 to 125 (LRSS…PIYN), 141 to 170 (GHTG…ALWD), 182 to 212 (GHTG…KLWD), 224 to 254 (GHES…RLFD), 268 to 298 (NIIC…NVWD), and 310 to 340 (GHDN…KIWN).

Belongs to the WD repeat G protein beta family. G proteins are composed of 3 units, alpha, beta and gamma.

In terms of biological role, guanine nucleotide-binding proteins (G proteins) are involved as a modulator or transducer in various transmembrane signaling systems. The beta and gamma chains are required for the GTPase activity, for replacement of GDP by GTP, and for G protein-effector interaction. This is Guanine nucleotide-binding protein G(I)/G(S)/G(T) subunit beta-1 (gnb1) from Xenopus laevis (African clawed frog).